A 120-amino-acid polypeptide reads, in one-letter code: Small ribosomal subunit protein uS10 (120 aa).

S16 and S18 each carry phosphoserine.

Belongs to the universal ribosomal protein uS10 family. As to expression, expressed ubiquitously in embryos, highest expression is in the midgut.

The polypeptide is Small ribosomal subunit protein uS10 (RpS20) (Drosophila melanogaster (Fruit fly)).